A 39-amino-acid polypeptide reads, in one-letter code: uncharacterized protein (39 aa).

A helical membrane pass occupies residues 18–38; it reads AIKVIALVVLITISAVVYLSV.

The protein localises to the membrane. This is an uncharacterized protein from Enterobacteriaceae (Bacteriophage Mu).